We begin with the raw amino-acid sequence, 181 residues long: Early upstream open reading frame (181 aa).

This sequence belongs to the EUO family.

In Chlamydia caviae (strain ATCC VR-813 / DSM 19441 / 03DC25 / GPIC) (Chlamydophila caviae), this protein is Early upstream open reading frame.